Here is a 544-residue protein sequence, read N- to C-terminus: Matrilin-1 (544 aa).

A signal peptide spans 1–26 (MRALSGPRLMLCGLLLLLFQAPCALG). A VWFA 1 domain is found at 42–217 (DLVFVVDSSR…SVIEKLSKKF (176 aa)). N77 carries N-linked (GlcNAc...) asparagine glycosylation. The region spanning 224–264 (VSDLCATGDHDCEQVCVSSPGSYTCACREGFTLNSDGKTCN) is the EGF-like domain. 3 disulfides stabilise this stretch: C228–C239, C235–C248, and C250–C263. The 173-residue stretch at 276–448 (DLVFLIDGSK…KTINQIGKKL (173 aa)) folds into the VWFA 2 domain. N345 carries N-linked (GlcNAc...) asparagine glycosylation.

In terms of assembly, homotrimer. Part of a complex composed of MATN1 (via VWFA1 domain), type 2 collagens and type 6 collagens. Forms a complex (via covalent bonds) with ACAN; the interaction increases in abundance with increasing age of the organism via an increase in occupancy of MATN1 binding sites. Interacts with COMP. In terms of processing, N-glycosylated; reduces binding affinity for type 2 collagens. Expressed in trachea from fetus into adulthood (at protein level).

It localises to the secreted. The protein resides in the extracellular space. Its subcellular location is the extracellular matrix. Its function is as follows. A major component of the extracellular matrix of non-articular cartilage. Binds to type 2 collagens and forms long concatenated protein networks as part of the extracellular matrix. Required for the network-like organization and bundling of collagen fibrils surrounding chondrocytes in the zones of maturation and hypertrophy. Required for mechanotransduction and adaption to mechanical loading in cartilage chondrocytes, resulting in an increase in expression of the extracellular matrix components ACAN and COL2A1. Acts as a moderator of angiogenesis in response to injury. The polypeptide is Matrilin-1 (Bos taurus (Bovine)).